The chain runs to 234 residues: Large ribosomal subunit protein uL1 (234 aa).

Belongs to the universal ribosomal protein uL1 family. Part of the 50S ribosomal subunit.

In terms of biological role, binds directly to 23S rRNA. The L1 stalk is quite mobile in the ribosome, and is involved in E site tRNA release. Functionally, protein L1 is also a translational repressor protein, it controls the translation of the L11 operon by binding to its mRNA. The polypeptide is Large ribosomal subunit protein uL1 (Klebsiella pneumoniae subsp. pneumoniae (strain ATCC 700721 / MGH 78578)).